The chain runs to 200 residues: Glycerol-3-phosphate acyltransferase (200 aa).

A run of 5 helical transmembrane segments spans residues 2 to 22 (FNIPAVAVSYLIGSLSFAVIV), 51 to 71 (KAAALTLLGDAAKGLVAVLLA), 84 to 104 (AIAAVALAALVGHMWPVFFGF), 114 to 134 (LGVLLALSPATALVCALIWLV), and 158 to 178 (LFFMPHTSWIFATLAIAILVL).

The protein belongs to the PlsY family. As to quaternary structure, probably interacts with PlsX.

The protein localises to the cell inner membrane. The enzyme catalyses an acyl phosphate + sn-glycerol 3-phosphate = a 1-acyl-sn-glycero-3-phosphate + phosphate. The protein operates within lipid metabolism; phospholipid metabolism. Catalyzes the transfer of an acyl group from acyl-phosphate (acyl-PO(4)) to glycerol-3-phosphate (G3P) to form lysophosphatidic acid (LPA). This enzyme utilizes acyl-phosphate as fatty acyl donor, but not acyl-CoA or acyl-ACP. In Neisseria gonorrhoeae (strain ATCC 700825 / FA 1090), this protein is Glycerol-3-phosphate acyltransferase.